The following is a 106-amino-acid chain: Urease subunit beta (106 aa).

The protein belongs to the urease beta subunit family. In terms of assembly, heterotrimer of UreA (gamma), UreB (beta) and UreC (alpha) subunits. Three heterotrimers associate to form the active enzyme.

It is found in the cytoplasm. The enzyme catalyses urea + 2 H2O + H(+) = hydrogencarbonate + 2 NH4(+). It participates in nitrogen metabolism; urea degradation; CO(2) and NH(3) from urea (urease route): step 1/1. This is Urease subunit beta from Escherichia coli O157:H7.